The sequence spans 483 residues: Triplex capsid protein 1 (483 aa).

An RIP homotypic interaction motif (RHIM) motif is present at residues 24 to 40; that stretch reads LLGNNRFIQIGNGLHMT.

Belongs to the herpesviridae TRX1 protein family. Interacts with TRX2, MCP and capsid vertex component 2/CVC2. Self-assembles into homo-oligomeric amyloid fibrils. Interacts with host ZBP1; this interaction prevents host necroptosis and extrinsic apoptosis. Interacts with host RIPK3.

It localises to the virion. The protein resides in the host nucleus. In terms of biological role, structural component of the T=16 icosahedral capsid. The capsid is composed of pentamers and hexamers of major capsid protein/MCP, which are linked together by heterotrimers called triplexes. These triplexes are formed by a single molecule of triplex protein 1/TRX1 and two copies of triplex protein 2/TRX2. Additionally, TRX1 is required for efficient transport of TRX2 to the nucleus, which is the site of capsid assembly. Also prevents necroptosis and extrinsic apoptosis by sequestering host ZBP1 into large, insoluble supercomplexes and impairing its ability to interact with RIPK3. The protein is Triplex capsid protein 1 of Varicella-zoster virus (strain Dumas) (HHV-3).